The chain runs to 133 residues: MSQLVYFSSSSENTQRFIERLGLPAVRIPLNERERIQVDEPYILIVPSYGGGGTAGAVPRQVIRFLNDEHNRVLLRGVIASGNRNFGEAYGRAGDVIARKCGVPWLYRFELMGTQSDIENVRKGVTEFWQRQP.

Belongs to the NrdI family.

In terms of biological role, probably involved in ribonucleotide reductase function. The chain is Protein NrdI from Escherichia coli O17:K52:H18 (strain UMN026 / ExPEC).